The following is a 303-amino-acid chain: UDP-3-O-acyl-N-acetylglucosamine deacetylase (303 aa).

Residues histidine 78, histidine 237, and aspartate 241 each coordinate Zn(2+). The active-site Proton donor is the histidine 264.

Belongs to the LpxC family. It depends on Zn(2+) as a cofactor.

It carries out the reaction a UDP-3-O-[(3R)-3-hydroxyacyl]-N-acetyl-alpha-D-glucosamine + H2O = a UDP-3-O-[(3R)-3-hydroxyacyl]-alpha-D-glucosamine + acetate. The protein operates within glycolipid biosynthesis; lipid IV(A) biosynthesis; lipid IV(A) from (3R)-3-hydroxytetradecanoyl-[acyl-carrier-protein] and UDP-N-acetyl-alpha-D-glucosamine: step 2/6. Catalyzes the hydrolysis of UDP-3-O-myristoyl-N-acetylglucosamine to form UDP-3-O-myristoylglucosamine and acetate, the committed step in lipid A biosynthesis. The polypeptide is UDP-3-O-acyl-N-acetylglucosamine deacetylase (Pseudomonas syringae pv. tomato (strain ATCC BAA-871 / DC3000)).